The primary structure comprises 89 residues: Putative regulatory protein CYB_0055 (89 aa).

Belongs to the RemA family.

In Synechococcus sp. (strain JA-2-3B'a(2-13)) (Cyanobacteria bacterium Yellowstone B-Prime), this protein is Putative regulatory protein CYB_0055.